A 251-amino-acid chain; its full sequence is tRNA (guanine-N(1)-)-methyltransferase (251 aa).

S-adenosyl-L-methionine contacts are provided by residues Gly122 and 142–147; that span reads IGDYVL. Residues 226–251 form a disordered region; that stretch reads RARRPDLFATRPQPNRQKPPKNTTDG. Positions 237-251 are enriched in polar residues; it reads PQPNRQKPPKNTTDG.

This sequence belongs to the RNA methyltransferase TrmD family. Homodimer.

The protein resides in the cytoplasm. It carries out the reaction guanosine(37) in tRNA + S-adenosyl-L-methionine = N(1)-methylguanosine(37) in tRNA + S-adenosyl-L-homocysteine + H(+). Its function is as follows. Specifically methylates guanosine-37 in various tRNAs. The polypeptide is tRNA (guanine-N(1)-)-methyltransferase (Rhodopseudomonas palustris (strain BisB18)).